The chain runs to 104 residues: MTYAIVETGGKQYRVQEGDTLRVEKLTAGEGETVVFDKVLAISRDGKVTVGTPYIEGAKVTAKVAAHGKGPKIIVFKYRNKTNYRRKTGHRQPFTAITIESIEG.

The protein belongs to the bacterial ribosomal protein bL21 family. As to quaternary structure, part of the 50S ribosomal subunit. Contacts protein L20.

Functionally, this protein binds to 23S rRNA in the presence of protein L20. This Symbiobacterium thermophilum (strain DSM 24528 / JCM 14929 / IAM 14863 / T) protein is Large ribosomal subunit protein bL21.